The following is a 371-amino-acid chain: Cytoplasmic dynein intermediate light chain DYN3 (371 aa).

Belongs to the dynein light intermediate chain DYN3 family. The cytoplasmic dynein is composed of at least two heavy chains and a number of intermediate and light chains.

The protein resides in the cytoplasm. The protein localises to the cytoskeleton. Component of the cytoplasmic dynein which acts as a motor for the intracellular retrograde motility of vesicles and organelles along microtubules. May play an important role in the proper orientation of the mitotic spindle into the budding daughter cell yeast. Probably required for normal progression of the cell cycle. The polypeptide is Cytoplasmic dynein intermediate light chain DYN3 (DYN3) (Eremothecium gossypii (strain ATCC 10895 / CBS 109.51 / FGSC 9923 / NRRL Y-1056) (Yeast)).